We begin with the raw amino-acid sequence, 575 residues long: MTSSDTFLALAPYGRQEVADALSSLPDGKDARSLRHAPYANRLIKLQSAMVPPKVDGTSERVAEIVKGLAEQGAIYPDQMGAIHSDLLNRAYTWNSMGVQESIQALVNDVIHGQNRTLQDELARTKEIANASLLTQFFDSLYKTVDRGQRNFEGFKKLLRLFVNNVPNAEVYGSSGSFSVQINLGGSSQNINLTNAFENLKPIWGARWDAVNNPRIGALLTPNTRALLFFVSSFYDYGAMEPGSYLDNIMRLYKEAIRADVDAEGDAIMELGEAGANLNLRFNDYKDTLNYLLQNREVVPDTAPLELSAEQEMLLKYLMRQLRQALKDGVPADISISTMTQYLDPRLYQTNKVFVEKLQNYLLAAQARNPVYYRLLVLDPNWRPPAGLYTGNYVIPDRYDFEDVQSELEYAGPSRDEYFDDSLFAPGPQRRLNSAEEAQLERDIESLTGHIDEELGVQSQAGWLADHRLPVAFDGALSLTERNAYNTPLPPDSHMRSRSSSVASDLGLLNLSGTGGPGFFASLRPSIGSRQPTGTAVGLRPTTPYSGSGCMRGTGLARKVLNPAASRRGRKLRFY.

Positions 1-95 are peripentonal hexon-tethering domain; sequence MTSSDTFLAL…DLLNRAYTWN (95 aa). The tract at residues 129-243 is binding to hexon-linking protein; that stretch reads ANASLLTQFF…FYDYGAMEPG (115 aa). The residue at position 497 (Ser497) is a Phosphoserine; by host. Residues 515-575 constitute a propeptide that is removed on maturation; it reads GGPGFFASLR…SRRGRKLRFY (61 aa). The interval 525–549 is disordered; it reads PSIGSRQPTGTAVGLRPTTPYSGSG.

This sequence belongs to the adenoviridae hexon-linking protein IIIa family. As to quaternary structure, interacts with hexon proteins; this interaction tethers the peripentonal hexons to hexons situated in the facet. Interacts with the penton protein (via N-terminus). Interacts with packaging protein 3; this interaction is required to promote correct genome packaging. Post-translationally, cleaved near the C-terminus by the viral protease during virion maturation to form the mature protein.

The protein resides in the virion. It localises to the host nucleus. Structural component of the virion that acts as a cement protein on the capsid exterior which mediates the interactions between the hexons, including the peripentonal hexons, and reaches all the way to the penton vertices. Two hexon linking proteins IIIa, one from each facet, stabilize the unique edge interface between a pair of facets. As the virus enters the host cell, hexon linking proteins IIIa are shed concomitant with virion acidification in the endosome. During virus assembly, seems to play a role in the serotype specificity of the packaging of viral DNA via its interaction with packaging protein 3. The protein is Pre-hexon-linking protein IIIa of Galliformes (FAdV-1).